Here is a 210-residue protein sequence, read N- to C-terminus: 2-hydroxy-3-keto-5-methylthiopentenyl-1-phosphate phosphatase (210 aa).

Belongs to the HAD-like hydrolase superfamily. MtnX family.

It catalyses the reaction 2-hydroxy-5-methylsulfanyl-3-oxopent-1-enyl phosphate + H2O = 1,2-dihydroxy-5-(methylsulfanyl)pent-1-en-3-one + phosphate. The protein operates within amino-acid biosynthesis; L-methionine biosynthesis via salvage pathway; L-methionine from S-methyl-5-thio-alpha-D-ribose 1-phosphate: step 4/6. In terms of biological role, dephosphorylates 2-hydroxy-3-keto-5-methylthiopentenyl-1-phosphate (HK-MTPenyl-1-P) yielding 1,2-dihydroxy-3-keto-5-methylthiopentene (DHK-MTPene). The protein is 2-hydroxy-3-keto-5-methylthiopentenyl-1-phosphate phosphatase of Microcystis aeruginosa (strain NIES-843 / IAM M-2473).